Consider the following 53-residue polypeptide: Large ribosomal subunit protein bL33 (53 aa).

This sequence belongs to the bacterial ribosomal protein bL33 family.

The polypeptide is Large ribosomal subunit protein bL33 (Ureaplasma parvum serovar 3 (strain ATCC 27815 / 27 / NCTC 11736)).